We begin with the raw amino-acid sequence, 94 residues long: ACWKANSCPGSAFESKDRLRSFALLYCRYNYKPPYGQGAFGYASAVSTHGWETEAQCINTFEQIITSCHGQSNGGTLELNSGRLSLAFGNCEEL.

As to quaternary structure, homodimer. In terms of processing, contains three disulfide bonds.

Functionally, alpha-galactosyl-binding lectin with preference for galactose-alpha-1,4-galactose. The polypeptide is Alpha-galactosyl-binding lectin (Lyophyllum decastes (Fried chicken mushroom)).